The chain runs to 172 residues: Adrenodoxin-like protein 1, mitochondrial (172 aa).

The 2Fe-2S ferredoxin-type domain maps to 57–159; the sequence is VNITYVDKDG…GMELELPKAT (103 aa). [2Fe-2S] cluster-binding residues include Cys94, Cys100, Cys103, and Cys140.

The protein belongs to the adrenodoxin/putidaredoxin family. [2Fe-2S] cluster serves as cofactor.

The protein resides in the mitochondrion matrix. Functionally, required for ecdysteroidogenesis in the prothoracic gland which is necessary for larval to pupal transition. The chain is Adrenodoxin-like protein 1, mitochondrial from Drosophila melanogaster (Fruit fly).